We begin with the raw amino-acid sequence, 110 residues long: uncharacterized protein (110 aa).

Residues 1–26 (MIRNVLLAFMICSGMTLLGGCSSVMS) form the signal peptide. Residues 87–110 (RVEKSEANAQATNAVIPPARMPDN) form a disordered region.

To E.coli YceK.

This is an uncharacterized protein from Escherichia coli (strain K12).